Here is a 137-residue protein sequence, read N- to C-terminus: Small ribosomal subunit protein bS16 (137 aa).

Basic and acidic residues-rich tracts occupy residues 80 to 99 (KSPEEAQKGGMRKGEFKRLQ) and 111 to 125 (VATEEPKAEEAKEAP). A disordered region spans residues 80 to 137 (KSPEEAQKGGMRKGEFKRLQAEQAAKAQKKAVATEEPKAEEAKEAPPAESQAAEGKEE). Positions 126 to 137 (PAESQAAEGKEE) are enriched in low complexity.

This sequence belongs to the bacterial ribosomal protein bS16 family.

This Coxiella burnetii (strain Dugway 5J108-111) protein is Small ribosomal subunit protein bS16.